A 279-amino-acid polypeptide reads, in one-letter code: Serine protease 29 (279 aa).

Positions 1 to 17 are cleaved as a signal peptide; that stretch reads MLIQLCLTLFFLGCSIA. In terms of domain architecture, Peptidase S1 spans 31-276; that stretch reads IVGGHSAPQG…FLPWITQQMQ (246 aa). Cys-62 and Cys-78 are joined by a disulfide. Residues His-77 and Asp-124 each act as charge relay system in the active site. Disulfide bonds link Cys-158–Cys-234, Cys-191–Cys-215, and Cys-224–Cys-252. N-linked (GlcNAc...) asparagine glycosylation occurs at Asn-197. The active-site Charge relay system is Ser-228. Asn-235 is a glycosylation site (N-linked (GlcNAc...) asparagine).

The protein belongs to the peptidase S1 family. In terms of assembly, homooligomer, heterodimer and heterotetramer. Able to form homo- and hetero- tetrameric structures. Heterotetramer is far more stable than the homotetramer. In terms of tissue distribution, expressed in embryos and placenta. Found in uterus especially in glandular epithelium during zona lysis and implantation.

It is found in the secreted. Involved in embryo hatching and implantation. In Mus musculus (Mouse), this protein is Serine protease 29 (Prss29).